The primary structure comprises 636 residues: 1-deoxy-D-xylulose-5-phosphate synthase (636 aa).

Thiamine diphosphate contacts are provided by residues His72 and 113-115 (GHA). Mg(2+) is bound at residue Asp144. Thiamine diphosphate-binding positions include 145-146 (GS), Asn174, Tyr287, and Glu370. Asn174 contacts Mg(2+).

The protein belongs to the transketolase family. DXPS subfamily. As to quaternary structure, homodimer. The cofactor is Mg(2+). Requires thiamine diphosphate as cofactor.

It carries out the reaction D-glyceraldehyde 3-phosphate + pyruvate + H(+) = 1-deoxy-D-xylulose 5-phosphate + CO2. The protein operates within metabolic intermediate biosynthesis; 1-deoxy-D-xylulose 5-phosphate biosynthesis; 1-deoxy-D-xylulose 5-phosphate from D-glyceraldehyde 3-phosphate and pyruvate: step 1/1. Functionally, catalyzes the acyloin condensation reaction between C atoms 2 and 3 of pyruvate and glyceraldehyde 3-phosphate to yield 1-deoxy-D-xylulose-5-phosphate (DXP). The chain is 1-deoxy-D-xylulose-5-phosphate synthase from Synechococcus elongatus (strain ATCC 33912 / PCC 7942 / FACHB-805) (Anacystis nidulans R2).